The chain runs to 278 residues: Keratin-associated protein 5-1 (278 aa).

8 consecutive repeat copies span residues 42 to 45, 48 to 51, 130 to 133, 136 to 139, 142 to 145, 239 to 242, 258 to 261, and 268 to 271. Residues 42–271 form an 8 X 4 AA repeats of C-C-X-P region; it reads CCVPVCCCKP…CCSQSSCCVP (230 aa).

Belongs to the KRTAP type 5 family. In terms of assembly, interacts with hair keratins. As to expression, expressed in hair root but not in skin. Expressed also in lung, pancreas, ovary, testis.

Its function is as follows. In the hair cortex, hair keratin intermediate filaments are embedded in an interfilamentous matrix, consisting of hair keratin-associated protein (KRTAP), which are essential for the formation of a rigid and resistant hair shaft through their extensive disulfide bond cross-linking with abundant cysteine residues of hair keratins. The matrix proteins include the high-sulfur and high-glycine-tyrosine keratins. The protein is Keratin-associated protein 5-1 (KRTAP5-1) of Homo sapiens (Human).